A 333-amino-acid polypeptide reads, in one-letter code: Glycerol-3-phosphate dehydrogenase [NAD(P)+] (333 aa).

5 residues coordinate NADPH: S10, W11, H31, R32, and K105. 3 residues coordinate sn-glycerol 3-phosphate: K105, G136, and S138. A140 serves as a coordination point for NADPH. Sn-glycerol 3-phosphate-binding residues include K191, D244, S254, R255, and N256. K191 serves as the catalytic Proton acceptor. R255 lines the NADPH pocket. NADPH is bound by residues V279 and E281.

The protein belongs to the NAD-dependent glycerol-3-phosphate dehydrogenase family.

Its subcellular location is the cytoplasm. It catalyses the reaction sn-glycerol 3-phosphate + NAD(+) = dihydroxyacetone phosphate + NADH + H(+). It carries out the reaction sn-glycerol 3-phosphate + NADP(+) = dihydroxyacetone phosphate + NADPH + H(+). Its pathway is membrane lipid metabolism; glycerophospholipid metabolism. Catalyzes the reduction of the glycolytic intermediate dihydroxyacetone phosphate (DHAP) to sn-glycerol 3-phosphate (G3P), the key precursor for phospholipid synthesis. This chain is Glycerol-3-phosphate dehydrogenase [NAD(P)+], found in Chlorobium phaeobacteroides (strain DSM 266 / SMG 266 / 2430).